Reading from the N-terminus, the 712-residue chain is 3',5'-cyclic-AMP phosphodiesterase 4C (712 aa).

Disordered stretches follow at residues 1–31 (MENLGVGEGAEACSRLSRSRGRHSMTRAPKH) and 45–64 (RFYSDPDKSAGCRERDLSPR). The span at 17 to 31 (SRSRGRHSMTRAPKH) shows a compositional bias: basic residues. A compositionally biased stretch (basic and acidic residues) spans 48 to 64 (SDPDKSAGCRERDLSPR). Ser73 carries the post-translational modification Phosphoserine. Residues 181–200 (AKQGPVGNPSSSNQLPPAED) are disordered. A PDEase domain is found at 312–641 (VQTDQEEQLA…EWYQSKIPRS (330 aa)). His388 (proton donor) is an active-site residue. His388 is a binding site for 3',5'-cyclic AMP. The AMP site is built by His388 and His392. Zn(2+) is bound by residues His392, His428, Asp429, and Asp546. Residues Asp429, Asp546, Gln597, and Phe600 each contribute to the AMP site. Asp429 is a binding site for Mg(2+). Asp429 is a binding site for Mn(2+). Residues Gln597 and Phe600 each coordinate 3',5'-cyclic AMP. Disordered regions lie at residues 636–655 (SKIPRSPSDLTNPERDGPDR) and 664–712 (EAEE…NQRT). Ser641 carries the phosphoserine modification. A compositionally biased stretch (acidic residues) spans 664–678 (EAEEEDEEEEEEGEE).

This sequence belongs to the cyclic nucleotide phosphodiesterase family. PDE4 subfamily. Part of a complex containing AKAP5, ADCY5, ADCY6 and PKD2. Zn(2+) serves as cofactor. The cofactor is Mg(2+). Requires Mn(2+) as cofactor. As to expression, expressed in various tissues but not in cells of the immune system.

It localises to the cell projection. It is found in the cilium. It carries out the reaction 3',5'-cyclic AMP + H2O = AMP + H(+). Its pathway is purine metabolism; 3',5'-cyclic AMP degradation; AMP from 3',5'-cyclic AMP: step 1/1. Inhibited by rolipram. Functionally, hydrolyzes the second messenger cAMP, which is a key regulator of many important physiological processes. The chain is 3',5'-cyclic-AMP phosphodiesterase 4C from Homo sapiens (Human).